A 434-amino-acid polypeptide reads, in one-letter code: 5'-deoxyadenosine deaminase (434 aa).

The Zn(2+) site is built by His63 and His65. Positions 92 and 184 each coordinate substrate. A Zn(2+)-binding site is contributed by His211. Substrate contacts are provided by Glu214 and Asp299. Asp299 contacts Zn(2+).

It belongs to the metallo-dependent hydrolases superfamily. MTA/SAH deaminase family. In terms of assembly, homotetramer. Zn(2+) is required as a cofactor.

The enzyme catalyses 5'-deoxyadenosine + H2O + H(+) = 5'-deoxyinosine + NH4(+). It catalyses the reaction S-adenosyl-L-homocysteine + H2O + H(+) = S-inosyl-L-homocysteine + NH4(+). The catalysed reaction is S-methyl-5'-thioadenosine + H2O + H(+) = S-methyl-5'-thioinosine + NH4(+). It carries out the reaction adenosine + H2O + H(+) = inosine + NH4(+). It functions in the pathway amino-acid biosynthesis; S-adenosyl-L-methionine biosynthesis. Its function is as follows. Catalyzes the deamination of three SAM-derived enzymatic products, namely 5'-deoxyadenosine, S-adenosyl-L-homocysteine, and 5'-methylthioadenosine, to produce the inosine analogs. Can also deaminate adenosine. The preferred substrate for this enzyme is 5'-deoxyadenosine, but all these substrates are efficiently deaminated. Likely functions in a S-adenosyl-L-methionine (SAM) recycling pathway from S-adenosyl-L-homocysteine (SAH) produced from SAM-dependent methylation reactions. May also be involved in the recycling of 5'-deoxyadenosine, whereupon the 5'-deoxyribose moiety of 5'-deoxyinosine is further metabolized to deoxyhexoses used for the biosynthesis of aromatic amino acids in methanogens. The polypeptide is 5'-deoxyadenosine deaminase (Methanococcoides burtonii (strain DSM 6242 / NBRC 107633 / OCM 468 / ACE-M)).